The sequence spans 93 residues: Protein 6 (93 aa).

A compositionally biased stretch (polar residues) spans Met-1–His-16. Residues Met-1–Asp-52 form a disordered region.

Its subcellular location is the virion. The sequence is that of Protein 6 (6) from Rice yellow stunt virus (RYSV).